The chain runs to 162 residues: Non-specific lipid transfer protein GPI-anchored 27 (162 aa).

A signal peptide spans 1-29; sequence MAYTNKVAVAVGAAVVFLAVVMNPRWTEA. Disulfide bonds link Cys39/Cys78, Cys50/Cys62, Cys63/Cys102, and Cys76/Cys110. Asn68 is a glycosylation site (N-linked (GlcNAc...) asparagine). Asn124 and Asn135 each carry an N-linked (GlcNAc...) asparagine glycan. The GPI-anchor amidated serine moiety is linked to residue Ser137. Residues 138–162 constitute a propeptide, removed in mature form; it reads VGGKNKVATSMSAFGLVAILLFVMF.

Belongs to the plant LTP family.

Its subcellular location is the cell membrane. In terms of biological role, probable lipid transfer protein. The chain is Non-specific lipid transfer protein GPI-anchored 27 from Arabidopsis thaliana (Mouse-ear cress).